The sequence spans 129 residues: Large ribosomal subunit protein eL32 (129 aa).

This sequence belongs to the eukaryotic ribosomal protein eL32 family.

The sequence is that of Large ribosomal subunit protein eL32 (rpl32e) from Methanosarcina acetivorans (strain ATCC 35395 / DSM 2834 / JCM 12185 / C2A).